A 345-amino-acid chain; its full sequence is S-adenosylmethionine:tRNA ribosyltransferase-isomerase (345 aa).

It belongs to the QueA family. In terms of assembly, monomer.

The protein resides in the cytoplasm. It catalyses the reaction 7-aminomethyl-7-carbaguanosine(34) in tRNA + S-adenosyl-L-methionine = epoxyqueuosine(34) in tRNA + adenine + L-methionine + 2 H(+). It participates in tRNA modification; tRNA-queuosine biosynthesis. In terms of biological role, transfers and isomerizes the ribose moiety from AdoMet to the 7-aminomethyl group of 7-deazaguanine (preQ1-tRNA) to give epoxyqueuosine (oQ-tRNA). The chain is S-adenosylmethionine:tRNA ribosyltransferase-isomerase from Anaeromyxobacter sp. (strain Fw109-5).